A 262-amino-acid chain; its full sequence is Thiazole synthase (262 aa).

The Schiff-base intermediate with DXP role is filled by Lys-95. 1-deoxy-D-xylulose 5-phosphate is bound by residues Gly-156, 182-183 (AG), and 204-205 (NT).

Belongs to the ThiG family. Homotetramer. Forms heterodimers with either ThiH or ThiS.

The protein localises to the cytoplasm. It carries out the reaction [ThiS sulfur-carrier protein]-C-terminal-Gly-aminoethanethioate + 2-iminoacetate + 1-deoxy-D-xylulose 5-phosphate = [ThiS sulfur-carrier protein]-C-terminal Gly-Gly + 2-[(2R,5Z)-2-carboxy-4-methylthiazol-5(2H)-ylidene]ethyl phosphate + 2 H2O + H(+). It participates in cofactor biosynthesis; thiamine diphosphate biosynthesis. Its function is as follows. Catalyzes the rearrangement of 1-deoxy-D-xylulose 5-phosphate (DXP) to produce the thiazole phosphate moiety of thiamine. Sulfur is provided by the thiocarboxylate moiety of the carrier protein ThiS. In vitro, sulfur can be provided by H(2)S. The sequence is that of Thiazole synthase from Yersinia enterocolitica serotype O:8 / biotype 1B (strain NCTC 13174 / 8081).